A 400-amino-acid chain; its full sequence is Exodeoxyribonuclease 7 large subunit (400 aa).

This sequence belongs to the XseA family. Heterooligomer composed of large and small subunits.

The protein localises to the cytoplasm. The enzyme catalyses Exonucleolytic cleavage in either 5'- to 3'- or 3'- to 5'-direction to yield nucleoside 5'-phosphates.. Bidirectionally degrades single-stranded DNA into large acid-insoluble oligonucleotides, which are then degraded further into small acid-soluble oligonucleotides. The polypeptide is Exodeoxyribonuclease 7 large subunit (Clostridium novyi (strain NT)).